A 463-amino-acid polypeptide reads, in one-letter code: tRNA (guanine(10)-N(2))-methyltransferase TRMT11 (463 aa).

Position 2 is an N-acetylalanine (A2).

This sequence belongs to the class I-like SAM-binding methyltransferase superfamily. TRM11 methyltransferase family. Part of the heterodimeric TRMT11-TRM112 methyltransferase complex; this complex forms an active tRNA methyltransferase, where TRMT112 acts as an activator of the catalytic subunit TRMT11.

It is found in the cytoplasm. It carries out the reaction guanosine(10) in tRNA + S-adenosyl-L-methionine = N(2)-methylguanosine(10) in tRNA + S-adenosyl-L-homocysteine + H(+). Its function is as follows. Catalytic subunit of the TRMT11-TRM112 methyltransferase complex, that specifically mediates the S-adenosyl-L-methionine-dependent N(2)-methylation of guanosine nucleotide at position 10 (m2G10) in tRNAs. This is one of the major tRNA (guanine-N(2))-methyltransferases. This is tRNA (guanine(10)-N(2))-methyltransferase TRMT11 from Pongo abelii (Sumatran orangutan).